Reading from the N-terminus, the 159-residue chain is Endoribonuclease YbeY (159 aa).

Zn(2+) is bound by residues histidine 117, histidine 121, and histidine 127.

Belongs to the endoribonuclease YbeY family. Zn(2+) is required as a cofactor.

Its subcellular location is the cytoplasm. Its function is as follows. Single strand-specific metallo-endoribonuclease involved in late-stage 70S ribosome quality control and in maturation of the 3' terminus of the 16S rRNA. The sequence is that of Endoribonuclease YbeY from Azorhizobium caulinodans (strain ATCC 43989 / DSM 5975 / JCM 20966 / LMG 6465 / NBRC 14845 / NCIMB 13405 / ORS 571).